A 180-amino-acid chain; its full sequence is MAARLQEFYKEQVVPKLIEQFGYKSVMEVPRITKITLNMGLGEAINDKKIIENAVGDLTKIAGQKPVVTKAKKAIAGFKIRQGYPIGAMVTLRGERMFEFLDRFVTVALPRVRDFRGVSGRSFDGRGNYNIGVKEQIIFPEIEYDKIDALRGLNISITTTAKNDEEAKALLGAFKFPFRN.

The protein belongs to the universal ribosomal protein uL5 family. As to quaternary structure, part of the 50S ribosomal subunit; part of the 5S rRNA/L5/L18/L25 subcomplex. Contacts the 5S rRNA and the P site tRNA. Forms a bridge to the 30S subunit in the 70S ribosome.

Its function is as follows. This is one of the proteins that bind and probably mediate the attachment of the 5S RNA into the large ribosomal subunit, where it forms part of the central protuberance. In the 70S ribosome it contacts protein S13 of the 30S subunit (bridge B1b), connecting the 2 subunits; this bridge is implicated in subunit movement. Contacts the P site tRNA; the 5S rRNA and some of its associated proteins might help stabilize positioning of ribosome-bound tRNAs. In Cupriavidus necator (strain ATCC 17699 / DSM 428 / KCTC 22496 / NCIMB 10442 / H16 / Stanier 337) (Ralstonia eutropha), this protein is Large ribosomal subunit protein uL5.